Reading from the N-terminus, the 394-residue chain is Elongation factor Tu (394 aa).

Residues 10-204 enclose the tr-type G domain; sequence KPHVNVGTIG…YLDSYIPEPE (195 aa). The interval 19-26 is G1; that stretch reads GHVDHGKT. Residue 19 to 26 coordinates GTP; the sequence is GHVDHGKT. Thr-26 lines the Mg(2+) pocket. The tract at residues 60-64 is G2; it reads GITIN. The segment at 81–84 is G3; that stretch reads DCPG. Residues 81-85 and 136-139 contribute to the GTP site; these read DCPGH and NKCD. The tract at residues 136-139 is G4; it reads NKCD. Residues 174–176 are G5; that stretch reads SAL.

It belongs to the TRAFAC class translation factor GTPase superfamily. Classic translation factor GTPase family. EF-Tu/EF-1A subfamily. Monomer.

The protein resides in the cytoplasm. It catalyses the reaction GTP + H2O = GDP + phosphate + H(+). GTP hydrolase that promotes the GTP-dependent binding of aminoacyl-tRNA to the A-site of ribosomes during protein biosynthesis. The polypeptide is Elongation factor Tu (Enterobacter sp. (strain 638)).